Reading from the N-terminus, the 138-residue chain is Small ribosomal subunit protein uS12 (138 aa).

Positions 33-55 (KEHTNVSSPQKRGVCTRVGTMTP) are disordered. D102 is modified (3-methylthioaspartic acid).

The protein belongs to the universal ribosomal protein uS12 family. As to quaternary structure, part of the 30S ribosomal subunit. Contacts proteins S8 and S17. May interact with IF1 in the 30S initiation complex.

With S4 and S5 plays an important role in translational accuracy. Functionally, interacts with and stabilizes bases of the 16S rRNA that are involved in tRNA selection in the A site and with the mRNA backbone. Located at the interface of the 30S and 50S subunits, it traverses the body of the 30S subunit contacting proteins on the other side and probably holding the rRNA structure together. The combined cluster of proteins S8, S12 and S17 appears to hold together the shoulder and platform of the 30S subunit. The polypeptide is Small ribosomal subunit protein uS12 (Bacillus licheniformis (strain ATCC 14580 / DSM 13 / JCM 2505 / CCUG 7422 / NBRC 12200 / NCIMB 9375 / NCTC 10341 / NRRL NRS-1264 / Gibson 46)).